The following is a 114-amino-acid chain: Hydrogenase maturation factor HypA (114 aa).

His2 contributes to the Ni(2+) binding site. Positions 73, 76, 90, and 93 each coordinate Zn(2+).

The protein belongs to the HypA/HybF family.

Its function is as follows. Involved in the maturation of [NiFe] hydrogenases. Required for nickel insertion into the metal center of the hydrogenase. This chain is Hydrogenase maturation factor HypA, found in Chloroflexus aggregans (strain MD-66 / DSM 9485).